The primary structure comprises 1264 residues: Imitation switch two complex protein 1 (1264 aa).

A WAC domain is found at 23–130; sequence VQVWHIEETG…GEVVYLRKQK (108 aa). Disordered stretches follow at residues 130-153, 275-374, 482-508, 627-655, and 803-825; these read KDSS…VEIN, PVVA…PANA, QEIE…NPSD, ATEV…SEER, and LNKT…SESN. Residues 132–147 show a composition bias toward low complexity; that stretch reads SSTTSSNSQQSTPQPD. Composition is skewed to polar residues over residues 280-289 and 299-310; these read RSNSANVSSP and KSSGKSNTSNDA. A DDT domain is found at 423–483; sequence FDSFGKLLQA…IRTQTSKEQE (61 aa).

Component of the ISW2 complex, which at least consists of ISW2, ITC1, DLS1 and DPB4. May form a stable subcomplex with ISW2.

It localises to the nucleus. Functions as a component of the ISW2 complex, which acts in remodeling the chromatin by catalyzing an ATP-dependent alteration in the structure of nucleosomal DNA. The ISW2 complex is involved in coordinating transcriptional repression and in inheritance of telomeric silencing. It is involved in repression of MAT a-specific genes, INO1, and early meiotic genes during mitotic growth dependent upon transcription factor UME6 and in a parallel pathway to the RPD3-SIN3 histone deacetylase complex. ITC1 is required for nucleosome-stimulated ATPase activity and chromatin-remodeling activity of the complex. Required for the repression of MATa a-specific genes. This Saccharomyces cerevisiae (strain ATCC 204508 / S288c) (Baker's yeast) protein is Imitation switch two complex protein 1 (ITC1).